The following is a 1488-amino-acid chain: MIYRWLLLVSCLLLALLAQRGAAKSSSPKIAPPTKIDHKPSSLFYFEDTDTVLMNTVNGDLLRSVDAGETWSVVEGDDGGMKHHVLLIRQHPYDNKKAYALGPNGRHWVTTDQAKTWASFNIAEFPAIRHYPLVFHGGDSSKVIFQGEECAGRYCIVRSYYTTDDFATVKLLRESTGGCAWAVGHPQFAEDLNLAEEIKDRSFCVVPGLKVPLPHANRLVYSDDYFKGNAEGTETKLQEGRPVSGVISTAAVKKFIVAAAKSKGTEELALYVTVDAKNWHRAEFDGHRIEEDAYTMLESTNYSLQVDVLTSPRSGMGVLFTSNSNGTYFTRNIEHTNRNSEGMVDFEKIAGIQGIVLVNTVQNPEEVESGSAKKKITSRISFDDGRTFQPLKSDGENLHLHSVTALRNIGRVFSSPAPGLVMGIGNTGNHLQEYAECNLYISDDAGVTWRRAIKHPHKYEFGDQGAVVIAVRDEGRVDKINYSLDHGKEWASVELQHKIYPTMVTTTPDSTSLKFIVVGSLKESQDGEHVIYSIDFDGLHERKCEEDDFEKWPARLDEHGKPDCLMGHKQFYMRRRANANCFVDEEFKDPQPIFEACKCTAEDFECEYRRTEDGKGCVIPSPLTPPEGECKKPDDKFMGPSGWRLIPGDACIRDGGENLDKEIERSCKDASSPSTDGKIRVTLQLLEARDYAQYYYLERQSSSSGSDETIIMLSSEHEVYVTHDHGKTWERPLKGEEITRVYLHPYSSDVAFLLTDGKEGFWTEDRGHTFKPFQAPAPPTQDRFLQVMAFHPVHKDRLIWTGAVDCHSGDCHSDAFIKKGRGKNWEPLLSYVQKCEFESRETRPNSTNLVYCEQFEKQSKNGRLQLLSSDDFFNDNEVQFVDVINYATMSEFIIVASRQPENPDSLVASTSVDGRTFARAQFPPNVQVPVQTAYTVLESSTHAVFLHVTASSTEGGEYGPIIKSNSNGTSYVLSISAVNRNSLGYVDFEKAQGLEGVAVVNVVSNVADVSKKVPKKLKTMITHNDGAQWMLLPPPTKDADGKSFGCSVVAGKGTDDCSLHLHGYTERKDERDTFASGSAIGLMMAVGNVGDHLAGGDEADTFITNDGGISWKSVKKGKYMWEYGDSGSVIVIVPESKPTKTIHYSLDEGDTWEEFQFSDVEVRINDISTVPSDTSKNFLLWARLSNSEVQDKFATFNIDFSGVRPRPCLLDENQGNSDDYYIWEPKHPFQENNCLFGHSEQYHRKKPSAQCWNDWRESHVHSIGTNCTCTRADYECDYNYEPQSDGSCALVPGLPKPDAMEICKKDPDTIEYWEPTGYRRIPQTTCQGGLNLDHFVSKPCPNKEEEYKQKHGISGVGLFFAIVTPLAVAGAAGYYAYSKWDGKFGQIRLGESAGTSQSFLSRDSWLVTVPIAIVAGTVAVARALPLLVTSLWRGASGFIRLGRGRGYSRPYASRGSFAARRGDYTSIVDDEDELLGVEDAELDEDDEA.

A signal peptide spans 1–23; the sequence is MIYRWLLLVSCLLLALLAQRGAA. At 24–1351 the chain is on the lumenal side; sequence KSSSPKIAPP…NKEEEYKQKH (1328 aa). The BNR 1 repeat unit spans residues 63–72; the sequence is RSVDAGETWS. Residues N301 and N325 are each glycosylated (N-linked (GlcNAc...) asparagine). 2 BNR repeats span residues 380 to 389 and 440 to 450; these read ISFDDGRTFQ and YISDDAGVTWR. N481 carries an N-linked (GlcNAc...) asparagine glycan. BNR repeat units lie at residues 482 to 490 and 720 to 730; these read YSLDHGKEW and YVTHDHGKTWE. Residues N845 and N967 are each glycosylated (N-linked (GlcNAc...) asparagine). BNR repeat units lie at residues 1102 to 1112 and 1144 to 1153; these read FITNDGGISWK and YSLDEGDTWE. N-linked (GlcNAc...) asparagine glycosylation is present at N1266. A helical transmembrane segment spans residues 1352-1372; the sequence is GISGVGLFFAIVTPLAVAGAA. The Cytoplasmic segment spans residues 1373–1405; sequence GYYAYSKWDGKFGQIRLGESAGTSQSFLSRDSW. The chain crosses the membrane as a helical span at residues 1406–1426; that stretch reads LVTVPIAIVAGTVAVARALPL. The Lumenal segment spans residues 1427-1488; that stretch reads LVTSLWRGAS…DAELDEDDEA (62 aa).

It belongs to the VPS10-related sortilin family.

It localises to the golgi apparatus. The protein resides in the trans-Golgi network membrane. Its subcellular location is the prevacuolar compartment membrane. In terms of biological role, functions as a sorting receptor in the Golgi compartment required for the intracellular sorting and delivery of soluble vacuolar proteins, like carboxypeptidase Y (CPY) and proteinase A. Executes multiple rounds of sorting by cycling between the late Golgi and a prevacuolar endosome-like compartment. The protein is Vacuolar protein sorting/targeting protein 10 (vps10) of Aspergillus oryzae (strain ATCC 42149 / RIB 40) (Yellow koji mold).